Consider the following 122-residue polypeptide: Large ribosomal subunit protein uL14c (122 aa).

Belongs to the universal ribosomal protein uL14 family. In terms of assembly, part of the 50S ribosomal subunit.

The protein resides in the plastid. Its subcellular location is the chloroplast. Its function is as follows. Binds to 23S rRNA. This chain is Large ribosomal subunit protein uL14c, found in Huperzia lucidula (Shining clubmoss).